The chain runs to 117 residues: Immunoglobulin lambda variable 1-51 (117 aa).

Positions 1 to 19 (MTCSPLLLTLLIHCTGSWA) are cleaved as a signal peptide. Glutamine 20 bears the Pyrrolidone carboxylic acid mark. Residues 20-44 (QSVLTQPPSVSAAPGQKVTISCSGS) form a framework-1 region. The 98-residue stretch at 20 to 117 (QSVLTQPPSV…CGTWDSSLSA (98 aa)) folds into the Ig-like domain. Residues cysteine 41 and cysteine 108 are joined by a disulfide bond. The tract at residues 45 to 52 (SSNIGNNY) is complementarity-determining-1. The framework-2 stretch occupies residues 53–69 (VSWYQQLPGTAPKLLIY). The tract at residues 70 to 72 (DNN) is complementarity-determining-2. Residues 73-108 (KRPSGIPDRFSGSKSGTSATLGITGLQTGDEADYYC) form a framework-3 region. The complementarity-determining-3 stretch occupies residues 109 to 117 (GTWDSSLSA).

As to quaternary structure, immunoglobulins are composed of two identical heavy chains and two identical light chains; disulfide-linked.

It is found in the secreted. It localises to the cell membrane. In terms of biological role, v region of the variable domain of immunoglobulin light chains that participates in the antigen recognition. Immunoglobulins, also known as antibodies, are membrane-bound or secreted glycoproteins produced by B lymphocytes. In the recognition phase of humoral immunity, the membrane-bound immunoglobulins serve as receptors which, upon binding of a specific antigen, trigger the clonal expansion and differentiation of B lymphocytes into immunoglobulins-secreting plasma cells. Secreted immunoglobulins mediate the effector phase of humoral immunity, which results in the elimination of bound antigens. The antigen binding site is formed by the variable domain of one heavy chain, together with that of its associated light chain. Thus, each immunoglobulin has two antigen binding sites with remarkable affinity for a particular antigen. The variable domains are assembled by a process called V-(D)-J rearrangement and can then be subjected to somatic hypermutations which, after exposure to antigen and selection, allow affinity maturation for a particular antigen. In Homo sapiens (Human), this protein is Immunoglobulin lambda variable 1-51.